The chain runs to 164 residues: Ferredoxin-type protein NapF (164 aa).

4Fe-4S ferredoxin-type domains are found at residues 28-57 (GDESHFLTHCTRCDACINACENNILQRGAG), 58-89 (GYPSVNFKNNECSFCYACAQACPESLFSPRHT), and 132-161 (YQPQLNSQLCNGCGACAASCPVSAITAEYL). Cysteine 37, cysteine 40, cysteine 43, cysteine 47, cysteine 69, cysteine 72, cysteine 75, cysteine 79, cysteine 141, cysteine 144, cysteine 147, and cysteine 151 together coordinate [4Fe-4S] cluster.

This sequence belongs to the NapF family. As to quaternary structure, interacts with the cytoplasmic NapA precursor. It depends on [4Fe-4S] cluster as a cofactor.

Its subcellular location is the cytoplasm. Its function is as follows. Could be involved in the maturation of NapA, the catalytic subunit of the periplasmic nitrate reductase, before its export into the periplasm. The protein is Ferredoxin-type protein NapF of Escherichia coli O157:H7.